The sequence spans 435 residues: 3-phosphoshikimate 1-carboxyvinyltransferase (435 aa).

Residues K28, S29, and R33 each coordinate 3-phosphoshikimate. K28 serves as a coordination point for phosphoenolpyruvate. Positions 100 and 128 each coordinate phosphoenolpyruvate. 4 residues coordinate 3-phosphoshikimate: S173, Q175, D321, and K348. Q175 serves as a coordination point for phosphoenolpyruvate. D321 acts as the Proton acceptor in catalysis. The phosphoenolpyruvate site is built by R352 and R394.

It belongs to the EPSP synthase family. As to quaternary structure, monomer.

It localises to the cytoplasm. The catalysed reaction is 3-phosphoshikimate + phosphoenolpyruvate = 5-O-(1-carboxyvinyl)-3-phosphoshikimate + phosphate. The protein operates within metabolic intermediate biosynthesis; chorismate biosynthesis; chorismate from D-erythrose 4-phosphate and phosphoenolpyruvate: step 6/7. In terms of biological role, catalyzes the transfer of the enolpyruvyl moiety of phosphoenolpyruvate (PEP) to the 5-hydroxyl of shikimate-3-phosphate (S3P) to produce enolpyruvyl shikimate-3-phosphate and inorganic phosphate. In Desulfitobacterium hafniense (strain DSM 10664 / DCB-2), this protein is 3-phosphoshikimate 1-carboxyvinyltransferase.